Here is a 1675-residue protein sequence, read N- to C-terminus: Clathrin heavy chain 1 (1675 aa).

Position 2 is an N-acetylalanine (A2). The segment at 2–479 (AQILPIRFQE…VDPTLALSVY (478 aa)) is globular terminal domain. WD40-like repeat regions lie at residues 24 to 67 (NIGF…RPIS), 68 to 107 (ADSA…MTDD), 108 to 149 (VTFW…SSLA), 150 to 195 (GCQI…QPIE), 196 to 257 (GHAA…PEAQ), 258 to 301 (NDFP…ISGE), and 302 to 330 (TIFV…VCVE). S67 is subject to Phosphoserine. Phosphothreonine is present on T105. Y184 carries the phosphotyrosine modification. T394 is subject to Phosphothreonine. Residues 449–465 (EKWLKEDKLECSEELGD) are binding site for the uncoating ATPase, involved in lattice disassembly. Residues 480–523 (LRANVPNKVIQCFAETGQVQKIVLYAKKVGYTPDWIFLLRNVMR) form a flexible linker region. The interval 524–634 (ISPDQGQQFA…RALEHFTDLY (111 aa)) is distal segment. Positions 524–1675 (ISPDQGQQFA…QPQPGFGYSM (1152 aa)) are heavy chain arm. CHCR repeat units follow at residues 537–683 (VQDE…QIWV), 686–828 (ASKY…SEDV), 833–972 (ILVV…PLID), 979–1124 (LSET…VKEA), 1128–1269 (YIKA…FRLA), 1274–1420 (LHIV…LLLN), and 1423–1566 (LMVL…RECF). Y634 bears the Phosphotyrosine mark. Residues 639 to 1675 (AVVHTHLLNP…QPQPGFGYSM (1037 aa)) are proximal segment. K737 carries the N6-succinyllysine modification. K856 carries the N6-acetyllysine modification. The residue at position 899 (Y899) is a Phosphotyrosine. S1167 carries the phosphoserine modification. Y1206 is subject to Phosphotyrosine. Residues 1213-1522 (AAKLLYNNVS…YLFKGNNRWK (310 aa)) form an involved in binding clathrin light chain region. S1229 is modified (phosphoserine). An N6-acetyllysine; alternate modification is found at K1441. K1441 carries the post-translational modification N6-succinyllysine; alternate. A phosphotyrosine mark is found at Y1477 and Y1487. S1494 is subject to Phosphoserine. At K1501 the chain carries N6-acetyllysine. A trimerization region spans residues 1550–1675 (AEELLQWFLQ…QPQPGFGYSM (126 aa)).

It belongs to the clathrin heavy chain family. As to quaternary structure, clathrin triskelions, composed of 3 heavy chains and 3 light chains, are the basic subunits of the clathrin coat. In the presence of light chains, hub assembly is influenced by both the pH and the concentration of calcium. Interacts with HIP1. Interacts with DENND1A, DENND1B and DENND1C. Interacts with OCRL. Interacts with ERBB2. Interacts with FKBP6. Interacts with CKAP5 and TACC3 forming the TACC3/ch-TOG/clathrin complex located at spindle inter-microtubules bridges; the complex implicates clathrin triskelions; TACC3 and CLTC are proposed to form a composite microtubule interaction surface. Interacts with ATG16L1 (via N-terminus). Interacts with RFTN1; the interaction occurs in response to pathogens. Interacts with USP2 isoform 2. Interacts with TMEM106B (via N-terminus). Interacts with DNAJC6; this interaction produces a local change in heavy-chain contacts, creating a detectable global distortion of the clathrin coat and leads to the recruitment of HSPA8.

The protein localises to the cytoplasmic vesicle membrane. It is found in the membrane. It localises to the coated pit. The protein resides in the melanosome. Its subcellular location is the cytoplasm. The protein localises to the cytoskeleton. It is found in the spindle. Functionally, clathrin is the major protein of the polyhedral coat of coated pits and vesicles. Two different adapter protein complexes link the clathrin lattice either to the plasma membrane or to the trans-Golgi network. Acts as a component of the TACC3/ch-TOG/clathrin complex proposed to contribute to stabilization of kinetochore fibers of the mitotic spindle by acting as inter-microtubule bridge. The TACC3/ch-TOG/clathrin complex is required for the maintenance of kinetochore fiber tension. Plays a role in early autophagosome formation. Interaction with DNAJC6 mediates the recruitment of HSPA8 to the clathrin lattice and creates local destabilization of the lattice promoting uncoating. The chain is Clathrin heavy chain 1 from Rattus norvegicus (Rat).